Reading from the N-terminus, the 373-residue chain is Diels-Alderase (373 aa).

Belongs to the Diels-Alderase family.

The enzyme catalyses (5S)-3-[(2E,6R,8E,10E,12E)-2,6-dimethyltetradeca-2,8,10,12-tetraenoyl]-5-(hydroxymethyl)pyrrolidine-2,4-dione = trichosetin. It participates in mycotoxin biosynthesis. In terms of biological role, hybrid PKS-NRPS synthetase; part of the gene cluster that mediates the biosynthesis of trichosetin, a trans-fused decalin-containing tetramic acid with antimicrobial activity. The PKS module of PKS-NRPS1 together with the enoylreductase (ER) catalyze the formation of the polyketide unit which is then conjugated to L-serine by the condensation domain of the PKS-NRPS1 NRPS module. Activity of the Dieckmann cyclase domain (RED) results in release of the Dieckmann product intermediate. Diels-Alderase (DA) is involved in endo-selective Diels-Alder cycloaddition to form the decalin ring, leading to the production of N-desmethylequisetin also called trichosetin. The cluster does not contain the equisetin N-methyltransferase and consequently, trichosetin is isolated as final product. The chain is Diels-Alderase from Gibberella fujikuroi (strain CBS 195.34 / IMI 58289 / NRRL A-6831) (Bakanae and foot rot disease fungus).